Consider the following 60-residue polypeptide: UPF0337 protein asr1134 (60 aa).

Basic and acidic residues-rich tracts occupy residues M1–A18 and P29–D60. The disordered stretch occupies residues M1–D60.

This sequence belongs to the UPF0337 (CsbD) family.

This Nostoc sp. (strain PCC 7120 / SAG 25.82 / UTEX 2576) protein is UPF0337 protein asr1134.